A 513-amino-acid chain; its full sequence is Aromatic amino acid aminotransferase 2 (513 aa).

A phosphoserine mark is found at Ser90 and Ser92. Residues Tyr102, 143 to 144 (SN), Asn232, Tyr263, and 314 to 316 (TFS) contribute to the pyridoxal 5'-phosphate site. Substrate is bound at residue Asn232. Lys317 carries the post-translational modification N6-(pyridoxal phosphate)lysine. Position 324 (Arg324) interacts with pyridoxal 5'-phosphate. Arg481 serves as a coordination point for substrate.

The protein belongs to the class-I pyridoxal-phosphate-dependent aminotransferase family. The cofactor is pyridoxal 5'-phosphate.

The protein localises to the cytoplasm. It catalyses the reaction an aromatic L-alpha-amino acid + 2-oxoglutarate = an aromatic oxo-acid + L-glutamate. It carries out the reaction an aromatic L-alpha-amino acid + 4-methylsulfanyl-2-oxobutanoate = an aromatic oxo-acid + L-methionine. The catalysed reaction is L-kynurenine + 2-oxoglutarate = kynurenate + L-glutamate + H2O. The protein operates within amino-acid biosynthesis; L-methionine biosynthesis via salvage pathway; L-methionine from S-methyl-5-thio-alpha-D-ribose 1-phosphate: step 6/6. It participates in amino-acid degradation; L-kynurenine degradation; kynurenate from L-kynurenine: step 1/2. Functionally, general aromatic amino acid transaminase involved in several otherwise unrelated metabolic pathways. Mainly involved in tryptophan degradation. Active with phenylalanine, tyrosine and tryptophan as amino donors and with phenylpyruvate, hydroxyphenylpyruvate and pyruvate as amino acceptors. Does not accept glutamate or 2-oxoglutarate as substrates. Also active with methionine, leucine, glutamine and kynurenine. Catalyzes the formation of methionine from 2-keto-4-methylthiobutyrate (KMTB) in the methionine salvage pathway primarily using aromatic amino acids (tyrosine, phenylalanine and tryptophan) as the amino donors. Catalyzes the irreversible transamination of the L-tryptophan metabolite L-kynurenine to form kynurenic acid (KA) with pyruvate as amino acceptor. The polypeptide is Aromatic amino acid aminotransferase 2 (Saccharomyces cerevisiae (strain ATCC 204508 / S288c) (Baker's yeast)).